The following is a 255-amino-acid chain: tRNA pseudouridine synthase A (255 aa).

The Nucleophile role is filled by Asp53. Tyr113 is a binding site for substrate.

The protein belongs to the tRNA pseudouridine synthase TruA family. As to quaternary structure, homodimer.

It carries out the reaction uridine(38/39/40) in tRNA = pseudouridine(38/39/40) in tRNA. Functionally, formation of pseudouridine at positions 38, 39 and 40 in the anticodon stem and loop of transfer RNAs. The chain is tRNA pseudouridine synthase A from Acidiphilium cryptum (strain JF-5).